A 130-amino-acid polypeptide reads, in one-letter code: Small ribosomal subunit protein uS9 (130 aa).

This sequence belongs to the universal ribosomal protein uS9 family.

The polypeptide is Small ribosomal subunit protein uS9 (rpsI) (Geobacillus stearothermophilus (Bacillus stearothermophilus)).